Consider the following 28-residue polypeptide: Chassatide C12 (28 aa).

The segment at residues 1-28 (EYCGESCYLIPCFTPGCYCVSRQCVNKN) is a cross-link (cyclopeptide (Glu-Asn)). Disulfide bonds link cysteine 3–cysteine 17, cysteine 7–cysteine 19, and cysteine 12–cysteine 24.

In terms of processing, this is a cyclic peptide. In terms of tissue distribution, expressed in fruit, pedicel, leaf and stem but not in root (at protein level).

In terms of biological role, probably participates in a plant defense mechanism. The sequence is that of Chassatide C12 from Chassalia chartacea (Chassalia curviflora).